The sequence spans 205 residues: Large ribosomal subunit protein bL25 (205 aa).

The tract at residues 178–205 (FPETEPVEDEESAGEDAQGESEEKAAKE) is disordered. The segment covering 182–197 (EPVEDEESAGEDAQGE) has biased composition (acidic residues).

The protein belongs to the bacterial ribosomal protein bL25 family. CTC subfamily. Part of the 50S ribosomal subunit; part of the 5S rRNA/L5/L18/L25 subcomplex. Contacts the 5S rRNA. Binds to the 5S rRNA independently of L5 and L18.

In terms of biological role, this is one of the proteins that binds to the 5S RNA in the ribosome where it forms part of the central protuberance. The polypeptide is Large ribosomal subunit protein bL25 (Cutibacterium acnes (strain DSM 16379 / KPA171202) (Propionibacterium acnes)).